The sequence spans 372 residues: MHNQAPIQRRKSTRIYVGNVPIGDGAPIAVQSMTNTRTTDVEATVNQIKALERVGADIVRVSVPTMDAAEAFKLIKQQVNVPLVADIHFDYRIALKVAEYGVDCLRINPGNIGNEERIRMVVDCARDKNIPIRIGVNAGSLEKDLQEKYGEPTPQALLESAMRHVDHLDRLNFDQFKVSVKASDVFLAVESYRLLAKQIDQPLHLGITEAGGARSGAVKSAIGLGLLLSEGIGDTLRVSLAADPVEEIKVGFDILKSLRIRSRGINFIACPTCSRQEFDVIGTVNALEQRLEDIITPMDVSIIGCVVNGPGEALVSTLGVTGGNKKSGLYEDGVRKDRLDNNDMIDQLEARIRAKASQLDEARRIDVQQVEK.

The [4Fe-4S] cluster site is built by cysteine 270, cysteine 273, cysteine 305, and glutamate 312.

It belongs to the IspG family. It depends on [4Fe-4S] cluster as a cofactor.

The catalysed reaction is (2E)-4-hydroxy-3-methylbut-2-enyl diphosphate + oxidized [flavodoxin] + H2O + 2 H(+) = 2-C-methyl-D-erythritol 2,4-cyclic diphosphate + reduced [flavodoxin]. The protein operates within isoprenoid biosynthesis; isopentenyl diphosphate biosynthesis via DXP pathway; isopentenyl diphosphate from 1-deoxy-D-xylulose 5-phosphate: step 5/6. Functionally, converts 2C-methyl-D-erythritol 2,4-cyclodiphosphate (ME-2,4cPP) into 1-hydroxy-2-methyl-2-(E)-butenyl 4-diphosphate. This chain is 4-hydroxy-3-methylbut-2-en-1-yl diphosphate synthase (flavodoxin), found in Escherichia coli O139:H28 (strain E24377A / ETEC).